The chain runs to 491 residues: Cytochrome P450 2H1 (491 aa).

Residue C436 coordinates heme.

It belongs to the cytochrome P450 family. Heme serves as cofactor. In terms of tissue distribution, expressed in liver.

Its subcellular location is the endoplasmic reticulum membrane. It is found in the microsome membrane. It catalyses the reaction an organic molecule + reduced [NADPH--hemoprotein reductase] + O2 = an alcohol + oxidized [NADPH--hemoprotein reductase] + H2O + H(+). Cytochromes P450 are a group of heme-thiolate monooxygenases. In liver microsomes, this enzyme is involved in an NADPH-dependent electron transport pathway. It oxidizes a variety of structurally unrelated compounds, including steroids, fatty acids, and xenobiotics. This chain is Cytochrome P450 2H1 (CYP2H1), found in Gallus gallus (Chicken).